Here is a 133-residue protein sequence, read N- to C-terminus: Snaclec botrocetin subunit alpha (133 aa).

Intrachain disulfides connect Cys-2-Cys-13, Cys-30-Cys-128, and Cys-103-Cys-120. A C-type lectin domain is found at 9 to 129 (YEGNCYKFFQ…CAQKNPFVCK (121 aa)).

Belongs to the snaclec family. In terms of assembly, heterodimer of subunits alpha and beta; disulfide-linked. Botrocetin and vWF form a soluble complex. As to expression, expressed by the venom gland.

Its subcellular location is the secreted. Functionally, snaclec that binds to von Willebrand factor (VWF) and induces its interaction with GPIbalpha (GP1BA) (via the vWF A1 domain), resulting in platelet aggregation. The sequence is that of Snaclec botrocetin subunit alpha from Bothrops jararaca (Jararaca).